A 261-amino-acid chain; its full sequence is Rhomboid-type serine protease 2 (261 aa).

5 consecutive transmembrane segments (helical) span residues 17–37, 58–78, 94–114, 116–136, and 155–175; these read LTAGLSVFLTLVYVLNWVFPI, LYPLAHLSIFHLLLNLMSLFV, ITLNLLAIVTGVVYCLVGMLL, PNVYVGGASGWCFTLCGYFAV, and LYIPLVFLVLVTLLMPGSSFV. Ser-124 serves as the catalytic Nucleophile. His-177 is an active-site residue.

Belongs to the peptidase S54 family.

Its subcellular location is the golgi apparatus membrane. The protein resides in the golgi apparatus. It is found in the cis-Golgi network membrane. The enzyme catalyses Cleaves type-1 transmembrane domains using a catalytic dyad composed of serine and histidine that are contributed by different transmembrane domains.. Functionally, probable rhomboid-type serine protease that catalyzes intramembrane proteolysis. This chain is Rhomboid-type serine protease 2 (RBD2), found in Eremothecium gossypii (strain ATCC 10895 / CBS 109.51 / FGSC 9923 / NRRL Y-1056) (Yeast).